The primary structure comprises 369 residues: MFYWLYEQFAASGYVPILNLLKYQTFRTGLAIFTAQFVVVAMGSRFIRWMQAKQGKGQPIRAEGIERHVIEKAGTPTMGGVMILAGLLVGTLLWSDLSNPYVWAVVLVTAGYGLLGFTDDYAKVTRQTTAGVSGKIRLALEAFIAMAAVLIIIVFAQKPPENPELLTSVTFPIFKQYFVDLSWGYLLFGAFIIVGAANAVNFTDGLDGLATVPVMIAAAAYGLIAYLVGNYVFSNYLQLHFVPGVGEIAVFCGALIGSGLGFLWYNAPPAKIFMGDTGSLALGGAVGAVAVATRHEIVLAIIGGLFVAETLSVIIQVAWFKRTGRRIFLMAPIHHHFEKLGWSESTVVIRFWIVAIMLALVGLATLKLR.

10 helical membrane passes run Leu30 to Met50, Gly74 to Trp94, Leu97 to Phe117, Ile136 to Ala156, Tyr177 to Ala197, Gly208 to Val228, Gly244 to Trp264, Ile272 to Ala292, Ile297 to Val317, and Thr346 to Leu366.

The protein belongs to the glycosyltransferase 4 family. MraY subfamily. The cofactor is Mg(2+).

Its subcellular location is the cell inner membrane. It catalyses the reaction UDP-N-acetyl-alpha-D-muramoyl-L-alanyl-gamma-D-glutamyl-meso-2,6-diaminopimeloyl-D-alanyl-D-alanine + di-trans,octa-cis-undecaprenyl phosphate = di-trans,octa-cis-undecaprenyl diphospho-N-acetyl-alpha-D-muramoyl-L-alanyl-D-glutamyl-meso-2,6-diaminopimeloyl-D-alanyl-D-alanine + UMP. It participates in cell wall biogenesis; peptidoglycan biosynthesis. Its function is as follows. Catalyzes the initial step of the lipid cycle reactions in the biosynthesis of the cell wall peptidoglycan: transfers peptidoglycan precursor phospho-MurNAc-pentapeptide from UDP-MurNAc-pentapeptide onto the lipid carrier undecaprenyl phosphate, yielding undecaprenyl-pyrophosphoryl-MurNAc-pentapeptide, known as lipid I. This chain is Phospho-N-acetylmuramoyl-pentapeptide-transferase, found in Phenylobacterium zucineum (strain HLK1).